Reading from the N-terminus, the 249-residue chain is tRNA (guanine-N(1)-)-methyltransferase (249 aa).

S-adenosyl-L-methionine-binding positions include glycine 113 and 133 to 138 (IGDFVV).

It belongs to the RNA methyltransferase TrmD family. Homodimer.

It is found in the cytoplasm. It catalyses the reaction guanosine(37) in tRNA + S-adenosyl-L-methionine = N(1)-methylguanosine(37) in tRNA + S-adenosyl-L-homocysteine + H(+). Functionally, specifically methylates guanosine-37 in various tRNAs. This is tRNA (guanine-N(1)-)-methyltransferase from Neisseria gonorrhoeae (strain ATCC 700825 / FA 1090).